The primary structure comprises 221 residues: Urease accessory protein UreE (221 aa).

A disordered region spans residues 160–194 (VPGTNKTTGDLAEEEQETERHEPHAHAIGEHHHEK). Residues 177-194 (TERHEPHAHAIGEHHHEK) show a composition bias toward basic and acidic residues.

This sequence belongs to the UreE family.

Its subcellular location is the cytoplasm. Involved in urease metallocenter assembly. Binds nickel. Probably functions as a nickel donor during metallocenter assembly. The protein is Urease accessory protein UreE of Bifidobacterium longum subsp. infantis (strain ATCC 15697 / DSM 20088 / JCM 1222 / NCTC 11817 / S12).